A 185-amino-acid polypeptide reads, in one-letter code: Adenine phosphoribosyltransferase (185 aa).

Belongs to the purine/pyrimidine phosphoribosyltransferase family.

It localises to the cytoplasm. The enzyme catalyses AMP + diphosphate = 5-phospho-alpha-D-ribose 1-diphosphate + adenine. It participates in purine metabolism; AMP biosynthesis via salvage pathway; AMP from adenine: step 1/1. In terms of biological role, catalyzes a salvage reaction resulting in the formation of AMP, that is energically less costly than de novo synthesis. This chain is Adenine phosphoribosyltransferase (aprt-1), found in Caenorhabditis elegans.